Reading from the N-terminus, the 352-residue chain is Fe(3+) ions import ATP-binding protein FbpC (352 aa).

The ABC transporter domain occupies 5–239 (LHIGHLSKSF…PADLDAVLFI (235 aa)). 37-44 (GASGCGKT) contributes to the ATP binding site.

It belongs to the ABC transporter superfamily. Fe(3+) ion importer (TC 3.A.1.10) family. In terms of assembly, the complex is composed of two ATP-binding proteins (FbpC), two transmembrane proteins (FbpB) and a solute-binding protein (FbpA).

Its subcellular location is the cell inner membrane. The catalysed reaction is Fe(3+)(out) + ATP + H2O = Fe(3+)(in) + ADP + phosphate + H(+). In terms of biological role, part of the ABC transporter complex FbpABC involved in Fe(3+) ions import. Responsible for energy coupling to the transport system. The sequence is that of Fe(3+) ions import ATP-binding protein FbpC from Neisseria gonorrhoeae.